The following is a 1252-amino-acid chain: Nephrin (1252 aa).

The first 35 residues, M1–L35, serve as a signal peptide directing secretion. Residues A36 to P1078 lie on the Extracellular side of the membrane. 6 Ig-like C2-type domains span residues P39–S144, P149–T247, P256–T347, P354–T448, P454–V554, and P558–S649. A glycan (N-linked (GlcNAc...) asparagine) is linked at N54. 3 disulfide bridges follow: C67–C125, C174–C231, and C279–C331. A glycan (N-linked (GlcNAc...) asparagine) is linked at N370. C375 and C431 are oxidised to a cystine. The residue at position 446 (S446) is a Phosphoserine. Residues C479 and C542 are joined by a disulfide bond. N-linked (GlcNAc...) asparagine glycans are attached at residues N561, N578, N591, and N722. C581 and C637 are disulfide-bonded. Ig-like C2-type domains lie at P754–L846 and P852–S953. Cystine bridges form between C775/C830 and C877/C934. A Fibronectin type-III domain is found at P957–P1052. The interval I1043–L1067 is disordered. The chain crosses the membrane as a helical span at residues V1079–L1099. Topologically, residues W1100 to V1252 are cytoplasmic. S1112 bears the Phosphoserine mark. Positions E1113 to Y1127 are enriched in basic and acidic residues. The tract at residues E1113–S1144 is disordered. T1115 bears the Phosphothreonine mark. Phosphoserine is present on S1119. A Phosphotyrosine; by FYN modification is found at Y1204.

It belongs to the immunoglobulin superfamily. Interacts with NPHS2 and with CD2AP (via C-terminal domain). Self-associates (via the Ig-like domains). Also interacts (via the Ig-like domains) with KIRREL1/NEPH1 and KIRREL2; the interaction with KIRREL1 is dependent on KIRREL1 glycosylation. Interacts with KIRREL3. Interacts with MAGI1 (via PDZ 2 and 3 domains) forming a tripartite complex with IGSF5/JAM4. Interacts with DDN; the interaction is direct. Forms a complex with ACTN4, CASK, IQGAP1, MAGI2, SPTAN1 and SPTBN1. Interacts with phosphatidylinositol 3-kinase regulatory subunit PIK3R1; the interaction is reduced by high glucose levels. Phosphorylated at Tyr-1204 by FYN, leading to the recruitment and activation of phospholipase C-gamma-1/PLCG1. Tyrosine phosphorylation is reduced by high glucose levels. Dephosphorylated by tensin TNS2 which leads to reduced binding of NPHN1 to PIK3R1. Strongly expressed in the podocytes of kidney glomeruli (at protein level) and at lower levels in the spleen.

The protein resides in the cell membrane. In terms of biological role, seems to play a role in the development or function of the kidney glomerular filtration barrier. Regulates glomerular vascular permeability. May anchor the podocyte slit diaphragm to the actin cytoskeleton. Plays a role in skeletal muscle formation through regulation of myoblast fusion. The protein is Nephrin (Nphs1) of Rattus norvegicus (Rat).